A 292-amino-acid chain; its full sequence is Ornithine decarboxylase antizyme (292 aa).

Belongs to the ODC antizyme family. In terms of assembly, interacts with ODC/SPE1 and thereby sterically blocks ODC homodimerization.

Functionally, ornithine decarboxylase (ODC) antizyme protein that negatively regulates ODC activity and intracellular polyamine biosynthesis in response to increased intracellular polyamine levels. Binds to ODC/SPE1 monomers, inhibiting the assembly of the functional ODC homodimer, and targets the monomers for ubiquitin-independent proteolytic destruction by the 26S proteasome. In Saccharomyces cerevisiae (strain ATCC 204508 / S288c) (Baker's yeast), this protein is Ornithine decarboxylase antizyme (OAZ1).